Reading from the N-terminus, the 168-residue chain is MRTQSLYNTHFSHTSFAVSNAAESTNDGKENGLISELVYNEHQPAVVQLLLPLLQQLGMQSRWLLWLTPQQKLSKLWLQQSGLPVGKVVQLSQINSLDTVEAMEKALLTGNYSVVLGWLPDLTEEDRLKLRRAAELGNAYGFIMRPQRDINPVHGHCSTLKIHSSLYH.

The ftsZ binding stretch occupies residues 106 to 112; it reads ALLTGNY. Positions 161–168 are lon protease binding; the sequence is KIHSSLYH.

The protein belongs to the SulA family. In terms of assembly, interacts with FtsZ. Is rapidly cleaved and degraded by the Lon protease once DNA damage is repaired.

Its function is as follows. Component of the SOS system and an inhibitor of cell division. Accumulation of SulA causes rapid cessation of cell division and the appearance of long, non-septate filaments. In the presence of GTP, binds a polymerization-competent form of FtsZ in a 1:1 ratio, thus inhibiting FtsZ polymerization and therefore preventing it from participating in the assembly of the Z ring. This mechanism prevents the premature segregation of damaged DNA to daughter cells during cell division. The protein is Cell division inhibitor SulA of Serratia proteamaculans (strain 568).